Here is a 349-residue protein sequence, read N- to C-terminus: MGDMGDPPKKKRLISLCVGCGNQIHDQYILRVSPDLEWHAACLKCAECNQYLDETCTCFVRDGKTYCKRDYIRLYGIKCAKCSIGFSKNDFVMRARAKVYHIECFRCVACSRQLIPGDEFALREDGLFCRADHDVVERASLGAGDPLSPLHPARPLQMAAEPISARQPALRPHVHKQPEKTTRVRTVLNEKQLHTLRTCYAANPRPDALMKEQLVEMTGLSPRVIRVWFQNKRCKDKKRSIMMKQLQQQQPNDKTNIQGMTGTPMVAASPERHDGGLQANPVEVQSYQPPWKVLSDFALQSDIDQPAFQQLVNFSEGGPGSNSTGSEVASMSSQLPDTPNSMVASPIEA.

2 consecutive LIM zinc-binding domains span residues C17–D70 and C79–H133. Residues T181 to S240 constitute a DNA-binding region (homeobox). The disordered stretch occupies residues V312–A349. A compositionally biased stretch (polar residues) spans S321 to V343.

The protein localises to the nucleus. Acts as a transcriptional regulator. Recognizes and binds to the consensus octamer binding site 5'-ATAATTAA-3' in promoter of target genes. Plays a fundamental role in the gene regulatory network essential for retinal ganglion cell (RGC) differentiation. Binds to insulin gene enhancer sequences. Defines subclasses of motoneurons that segregate into columns in the spinal cord and select distinct axon pathways. Acts in conjunction with LHX1, LHX3 and ISL2. Binds to insulin gene enhancer sequences. Essential for heart development. The protein is Insulin gene enhancer protein ISL-1 (ISL1) of Gallus gallus (Chicken).